The sequence spans 207 residues: Large ribosomal subunit protein uL4 (207 aa).

The segment at 50 to 76 is disordered; it reads AVKNRSAVSGGGRKPWKQKGTGRARQG.

It belongs to the universal ribosomal protein uL4 family. In terms of assembly, part of the 50S ribosomal subunit.

One of the primary rRNA binding proteins, this protein initially binds near the 5'-end of the 23S rRNA. It is important during the early stages of 50S assembly. It makes multiple contacts with different domains of the 23S rRNA in the assembled 50S subunit and ribosome. Its function is as follows. Forms part of the polypeptide exit tunnel. This chain is Large ribosomal subunit protein uL4, found in Staphylococcus aureus (strain MRSA252).